The primary structure comprises 856 residues: Structure-specific endonuclease subunit SLX4 (856 aa).

The segment covering 1–19 has biased composition (polar residues); that stretch reads MDNAAIASQSNTPPSNGRS. Disordered regions lie at residues 1 to 24, 38 to 65, 88 to 121, 139 to 202, 296 to 326, 362 to 392, 621 to 640, 668 to 689, and 715 to 742; these read MDNA…ARFV, VIEP…SHKI, VDSP…HKMA, KTRK…DNEL, GIQT…KKPQ, KKMG…GNGP, SKSS…SQGD, RLAK…NEGP, and DSVG…QDCD. The segment covering 51-60 has biased composition (low complexity); that stretch reads STLLTSLSKS. Over residues 139–152 the composition is skewed to basic residues; it reads KTRKKKAATAKRTR. Residues 296–309 are compositionally biased toward polar residues; the sequence is GIQTPTESRPATND. Polar residues predominate over residues 673–686; the sequence is SVKSQEPKSFSLSN.

Belongs to the SLX4 family. As to quaternary structure, forms a heterodimer with SLX1. Phosphorylated in response to DNA damage.

It localises to the nucleus. Its function is as follows. Regulatory subunit of the SLX1-SLX4 structure-specific endonuclease that resolves DNA secondary structures generated during DNA repair and recombination. Has endonuclease activity towards branched DNA substrates, introducing single-strand cuts in duplex DNA close to junctions with ss-DNA. In Blastomyces gilchristii (strain SLH14081) (Blastomyces dermatitidis), this protein is Structure-specific endonuclease subunit SLX4.